Consider the following 198-residue polypeptide: E3 ubiquitin-protein ligase rnf152 (198 aa).

An RING-type zinc finger spans residues 12–55 (CQICFNYFSQRRLPKLLHCQHTCCSVCLSQMRLSQREIRCPWCR). A helical transmembrane segment spans residues 162 to 182 (TGVCTVLLVAFILIFLLGIVL).

The protein belongs to the RNF152 family.

It localises to the lysosome membrane. It catalyses the reaction S-ubiquitinyl-[E2 ubiquitin-conjugating enzyme]-L-cysteine + [acceptor protein]-L-lysine = [E2 ubiquitin-conjugating enzyme]-L-cysteine + N(6)-ubiquitinyl-[acceptor protein]-L-lysine.. The protein operates within protein modification; protein ubiquitination. Functionally, E3 ubiquitin-protein ligase that acts as a negative regulator of mTORC1 signaling by mediating ubiquitination of RagA/RRAGA and RHEB. Catalyzes 'Lys-63'-linked polyubiquitination of RagA/RRAGA in response to amino acid starvation, thereby regulating mTORC1 signaling. Also mediates monoubiquitination of RHEB, promoting its association with the TSC-TBC complex and subsequent inhibition. Also mediates 'Lys-48'-linked polyubiquitination of target proteins and their subsequent targeting to the proteasome for degradation. This is E3 ubiquitin-protein ligase rnf152 from Danio rerio (Zebrafish).